The chain runs to 459 residues: uncharacterized protein (459 aa).

The TRAM domain maps to 2–60; it reads NLRVKQKIPLKIKRMGINGEGIGFYKRTLVFVPGALKGEEIFCQITSVKHNFVQARLLT. [4Fe-4S] cluster-binding residues include cysteine 73, cysteine 79, cysteine 82, and cysteine 162. S-adenosyl-L-methionine contacts are provided by glutamine 284, tyrosine 313, aspartate 334, and aspartate 382. Cysteine 409 serves as the catalytic Nucleophile.

This sequence belongs to the class I-like SAM-binding methyltransferase superfamily. RNA M5U methyltransferase family.

This is an uncharacterized protein from Streptococcus mutans serotype c (strain ATCC 700610 / UA159).